Consider the following 868-residue polypeptide: MHELYQPREIEAAAQTFWDEQKSFEVSEQPGKETFYCLSMFPYPSGKLHMGHVRNYTIGDVISRYQRMLGKNVLQPLGWDAFGMPAENAAIDNNVAPAKWTYENIAYMKNQLKSLGLAVDWSREVTTCKPDYYRWEQWLFTRLFEKGVIYRKNGTVNWDPIDQTVLANEQVIDGRGWRSGALIEKREIPMYYFKITAYADELLESLDELPGWPEQVKTMQRNWIGRSRGMEVQFPYDQASIGEAGALKVFTTRPDTLMGATYVAVAAEHPLATLAAQGNPALQAFIDECKGGSVAEADVATQEKKGQPTSLFVEHPLTGEKLPVWVANYVLMHYGDGAVMAVPAHDERDFEFASKYDLPIKPVVRTSAGDETPAPWQAEYNEQGPLINSGEFTGLHFQDAFDAIEAALVKKALGQSRTQFRLRDWGISRQRYWGCPIPIVHCDTCGDVPVPEDQLPVILPEDVVPDGAGSPLARMPQFYECSCPKCGAPAKRETDTMDTFVESSWYYARYASPHYEGGLVEPNAANHWLPVDQYIGGIEHAILHLLYARFFHKLMRDEGLVTSNEPFKNLLTQGMVNAETYFRMETSGKKTWINPADVTLERDAKAKVISATLTSDGLPVEIGGTEKMSKSKKNGIDPQTMIDQYGADTCRLFMMFASPPDMSLEWSDSGVEGSHRFLRRVWRLAQAHVGQGASGSLDIAALTDEQKAVRRSIHQAIKQASQDIGQNQKFNTAVAQVMTLMNVLEKAPQATPQDRALLQEGLETVTLLLAPITPHISHELWTQLGHNEPVIDAGWPVFDAHALVQDSLQLVIQVNGKLRGHIEMPASASREEVEAAARINENVLRFTDGLTIRKVIVVPGKLVNIVAS.

Positions 42–52 (PYPSGKLHMGH) match the 'HIGH' region motif. Positions 627 to 631 (KMSKS) match the 'KMSKS' region motif. Residue lysine 630 coordinates ATP.

Belongs to the class-I aminoacyl-tRNA synthetase family.

The protein resides in the cytoplasm. The enzyme catalyses tRNA(Leu) + L-leucine + ATP = L-leucyl-tRNA(Leu) + AMP + diphosphate. The chain is Leucine--tRNA ligase from Pseudomonas syringae pv. tomato (strain ATCC BAA-871 / DC3000).